Here is a 155-residue protein sequence, read N- to C-terminus: Xanthine-guanine phosphoribosyltransferase 2 (155 aa).

Residues 37-38 (RG) and 91-99 (DDLVDTGNT) contribute to the 5-phospho-alpha-D-ribose 1-diphosphate site. D92 provides a ligand contact to Mg(2+). Guanine-binding residues include D95 and I138. D95 and I138 together coordinate xanthine. Residues 95–99 (DTGNT) and 137–138 (WI) contribute to the GMP site.

Belongs to the purine/pyrimidine phosphoribosyltransferase family. XGPT subfamily. As to quaternary structure, homotetramer. Requires Mg(2+) as cofactor.

The protein resides in the cell inner membrane. It carries out the reaction GMP + diphosphate = guanine + 5-phospho-alpha-D-ribose 1-diphosphate. It catalyses the reaction XMP + diphosphate = xanthine + 5-phospho-alpha-D-ribose 1-diphosphate. The enzyme catalyses IMP + diphosphate = hypoxanthine + 5-phospho-alpha-D-ribose 1-diphosphate. It participates in purine metabolism; GMP biosynthesis via salvage pathway; GMP from guanine: step 1/1. Its pathway is purine metabolism; XMP biosynthesis via salvage pathway; XMP from xanthine: step 1/1. In terms of biological role, purine salvage pathway enzyme that catalyzes the transfer of the ribosyl-5-phosphate group from 5-phospho-alpha-D-ribose 1-diphosphate (PRPP) to the N9 position of the 6-oxopurines guanine and xanthine to form the corresponding ribonucleotides GMP (guanosine 5'-monophosphate) and XMP (xanthosine 5'-monophosphate), with the release of PPi. To a lesser extent, also acts on hypoxanthine. The protein is Xanthine-guanine phosphoribosyltransferase 2 of Haemophilus influenzae (strain 86-028NP).